Consider the following 234-residue polypeptide: Uridylate kinase (234 aa).

10-11 (GS) serves as a coordination point for ATP. G44 contributes to the UMP binding site. G45 and R49 together coordinate ATP. UMP contacts are provided by residues D66 and 114–120 (ITPGQTT). Residues T140, Y146, and D149 each coordinate ATP.

This sequence belongs to the UMP kinase family. In terms of assembly, homohexamer.

The protein resides in the cytoplasm. It catalyses the reaction UMP + ATP = UDP + ADP. The protein operates within pyrimidine metabolism; CTP biosynthesis via de novo pathway; UDP from UMP (UMPK route): step 1/1. With respect to regulation, inhibited by UTP. Its function is as follows. Catalyzes the reversible phosphorylation of UMP to UDP. This chain is Uridylate kinase, found in Methanoregula boonei (strain DSM 21154 / JCM 14090 / 6A8).